Here is a 339-residue protein sequence, read N- to C-terminus: Phosphate acyltransferase (339 aa).

The protein belongs to the PlsX family. As to quaternary structure, homodimer. Probably interacts with PlsY.

It localises to the cytoplasm. It carries out the reaction a fatty acyl-[ACP] + phosphate = an acyl phosphate + holo-[ACP]. It participates in lipid metabolism; phospholipid metabolism. Its function is as follows. Catalyzes the reversible formation of acyl-phosphate (acyl-PO(4)) from acyl-[acyl-carrier-protein] (acyl-ACP). This enzyme utilizes acyl-ACP as fatty acyl donor, but not acyl-CoA. The polypeptide is Phosphate acyltransferase (Methylococcus capsulatus (strain ATCC 33009 / NCIMB 11132 / Bath)).